Consider the following 295-residue polypeptide: Indole-3-glycerol phosphate synthase (295 aa).

This sequence belongs to the TrpC family.

The catalysed reaction is 1-(2-carboxyphenylamino)-1-deoxy-D-ribulose 5-phosphate + H(+) = (1S,2R)-1-C-(indol-3-yl)glycerol 3-phosphate + CO2 + H2O. It functions in the pathway amino-acid biosynthesis; L-tryptophan biosynthesis; L-tryptophan from chorismate: step 4/5. The protein is Indole-3-glycerol phosphate synthase of Synechococcus sp. (strain ATCC 27144 / PCC 6301 / SAUG 1402/1) (Anacystis nidulans).